Here is a 60-residue protein sequence, read N- to C-terminus: Putative potassium channel blocker TXKS1 (60 aa).

Residues 1–28 (MNRLTTIILMLIVINVIMDDISESKVAA) form the signal peptide. 3 disulfide bridges follow: C32/C49, C35/C55, and C39/C57. K59 carries the post-translational modification Lysine amide.

In terms of tissue distribution, expressed by the venom gland.

Its subcellular location is the secreted. Functionally, inhibits potassium channels. The sequence is that of Putative potassium channel blocker TXKS1 from Olivierus martensii (Manchurian scorpion).